Consider the following 387-residue polypeptide: Migration and invasion-inhibitory protein (387 aa).

Over residues 50 to 59 the composition is skewed to polar residues; the sequence is NLEMPLSQET. 2 disordered regions span residues 50–80 and 133–172; these read NLEM…DPLD and VSLG…SAVP. The span at 60–69 shows a compositional bias: low complexity; that stretch reads SSASSVAPSS. The span at 70-80 shows a compositional bias: basic and acidic residues; that stretch reads QDKRHMLDPLD. The residue at position 307 (Ser-307) is a Phosphoserine.

Interacts with IGFBP2.

Inhibits glioma cells invasion and down-regulates adhesion- and motility-associated genes such as NFKB2 and ICAM1. Exhibits opposing effects to IGFBP2 on cell invasion. This is Migration and invasion-inhibitory protein (Miip) from Mus musculus (Mouse).